Consider the following 511-residue polypeptide: 2-isopropylmalate synthase (511 aa).

Basic and acidic residues predominate over residues 1-16 (MTRKIDIFDTTLRDGE). Positions 1-23 (MTRKIDIFDTTLRDGEQSPGASM) are disordered. Residues 5-268 (IDIFDTTLRD…HTDVVTQELT (264 aa)) form the Pyruvate carboxyltransferase domain. Residues aspartate 14, histidine 203, histidine 205, and asparagine 239 each contribute to the Mn(2+) site. The segment at 392-511 (ALESVQVVCG…IQTTRSKQGK (120 aa)) is regulatory domain.

It belongs to the alpha-IPM synthase/homocitrate synthase family. LeuA type 1 subfamily. Homodimer. Requires Mn(2+) as cofactor.

The protein resides in the cytoplasm. It catalyses the reaction 3-methyl-2-oxobutanoate + acetyl-CoA + H2O = (2S)-2-isopropylmalate + CoA + H(+). It functions in the pathway amino-acid biosynthesis; L-leucine biosynthesis; L-leucine from 3-methyl-2-oxobutanoate: step 1/4. Its function is as follows. Catalyzes the condensation of the acetyl group of acetyl-CoA with 3-methyl-2-oxobutanoate (2-ketoisovalerate) to form 3-carboxy-3-hydroxy-4-methylpentanoate (2-isopropylmalate). This chain is 2-isopropylmalate synthase, found in Olsenella uli (strain ATCC 49627 / DSM 7084 / CCUG 31166 / CIP 109912 / JCM 12494 / LMG 11480 / NCIMB 702895 / VPI D76D-27C) (Lactobacillus uli).